The chain runs to 29 residues: Putative membrane protein PmrR (29 aa).

The chain crosses the membrane as a helical span at residues 5 to 27 (VYESLTTVFSVLVVSSFLYIWFA).

The protein resides in the cell inner membrane. Functionally, may bind to BasS and modulate its sensor kinase activity. This chain is Putative membrane protein PmrR (pmrR), found in Escherichia coli (strain K12).